The chain runs to 406 residues: uncharacterized protein (406 aa).

To S.pombe SpAC12C2.04.

The protein resides in the cytoplasm. It localises to the nucleus. This is an uncharacterized protein from Schizosaccharomyces pombe (strain 972 / ATCC 24843) (Fission yeast).